Here is a 150-residue protein sequence, read N- to C-terminus: MDLSGKMVKQVEILSDGIVFYEIFRYRLYLISEMSPVNIQGVDLLEGNWGTVGSVIFFKYTIDGKEKTAKDIVEAIDEETKSVTFKIVEGDLMELYKTFIIIVQVDTKGEHNSVTWTFHYEKLKEDVEEPNTLMNFCIEITKDIETYHLK.

Position 1 is an N-acetylmethionine (Met-1).

This sequence belongs to the MLP family. As to quaternary structure, monomer. In terms of processing, the N-terminus is blocked.

The protein is Kirola of Actinidia deliciosa (Kiwi).